The following is a 186-amino-acid chain: MKIGVLALQGAVREHIRHIELSGHEGIAVKKVEQLEEIEGLILPGGESTTLRRLMNLYGFKEALQNSTLPMFGTCAGLIVLAQDIVGEEGYLNKLNITVQRNSFGRQVDSFETELDIKGIATDIEGVFIRAPHIEKVGQGVDILCKVNEKIVAVQQGKYLGVSFHPELTDDYRVTDYFINHIVKKA.

L-glutamine is bound at residue 46 to 48 (GES). Residue Cys75 is the Nucleophile of the active site. L-glutamine-binding positions include Arg101 and 129–130 (IR). Residues His165 and Glu167 each act as charge relay system in the active site.

It belongs to the glutaminase PdxT/SNO family. As to quaternary structure, in the presence of PdxS, forms a dodecamer of heterodimers. Only shows activity in the heterodimer.

It carries out the reaction aldehydo-D-ribose 5-phosphate + D-glyceraldehyde 3-phosphate + L-glutamine = pyridoxal 5'-phosphate + L-glutamate + phosphate + 3 H2O + H(+). It catalyses the reaction L-glutamine + H2O = L-glutamate + NH4(+). It functions in the pathway cofactor biosynthesis; pyridoxal 5'-phosphate biosynthesis. Functionally, catalyzes the hydrolysis of glutamine to glutamate and ammonia as part of the biosynthesis of pyridoxal 5'-phosphate. The resulting ammonia molecule is channeled to the active site of PdxS. The polypeptide is Pyridoxal 5'-phosphate synthase subunit PdxT (Staphylococcus aureus (strain Mu3 / ATCC 700698)).